We begin with the raw amino-acid sequence, 268 residues long: Secreted RxLR effector protein 5 (268 aa).

The N-terminal stretch at 1–21 (MRGAFYMAITLFLARSRSATA) is a signal peptide. The RxLR-dEER signature appears at 48–63 (RYLRDGLALSAANEER). The N-linked (GlcNAc...) asparagine glycan is linked to N104.

It belongs to the RxLR effector family.

It is found in the secreted. It localises to the host nucleus. Effector that acts as a broad suppressor of cell death to interrupt plant immunity. Inhibits cell death induced by cell death-inducing proteins, including the PAMP elicitor INF1 from P.infestans. This is Secreted RxLR effector protein 5 from Plasmopara viticola (Downy mildew of grapevine).